Reading from the N-terminus, the 194-residue chain is Peptidyl-tRNA hydrolase (194 aa).

Residue Tyr-16 participates in tRNA binding. His-21 functions as the Proton acceptor in the catalytic mechanism. Positions 67, 69, and 115 each coordinate tRNA.

The protein belongs to the PTH family. Monomer.

It localises to the cytoplasm. It carries out the reaction an N-acyl-L-alpha-aminoacyl-tRNA + H2O = an N-acyl-L-amino acid + a tRNA + H(+). In terms of biological role, hydrolyzes ribosome-free peptidyl-tRNAs (with 1 or more amino acids incorporated), which drop off the ribosome during protein synthesis, or as a result of ribosome stalling. Functionally, catalyzes the release of premature peptidyl moieties from peptidyl-tRNA molecules trapped in stalled 50S ribosomal subunits, and thus maintains levels of free tRNAs and 50S ribosomes. This is Peptidyl-tRNA hydrolase from Klebsiella pneumoniae (strain 342).